A 232-amino-acid chain; its full sequence is Large ribosomal subunit protein uL1 (232 aa).

It belongs to the universal ribosomal protein uL1 family. In terms of assembly, part of the 50S ribosomal subunit.

Functionally, binds directly to 23S rRNA. The L1 stalk is quite mobile in the ribosome, and is involved in E site tRNA release. Its function is as follows. Protein L1 is also a translational repressor protein, it controls the translation of the L11 operon by binding to its mRNA. The sequence is that of Large ribosomal subunit protein uL1 from Colwellia psychrerythraea (strain 34H / ATCC BAA-681) (Vibrio psychroerythus).